Reading from the N-terminus, the 432-residue chain is Adenylosuccinate synthetase (432 aa).

GTP-binding positions include 12–18 (GDEGKGK) and 40–42 (GHT). The active-site Proton acceptor is Asp13. Asp13 and Gly40 together coordinate Mg(2+). Residues 13-16 (DEGK), 38-41 (NAGH), Thr129, Arg143, Gln224, Thr239, and Arg303 each bind IMP. His41 functions as the Proton donor in the catalytic mechanism. 299 to 305 (VTTGRRR) provides a ligand contact to substrate. GTP is bound by residues Arg305, 331–333 (KLD), and 413–415 (GVG).

Belongs to the adenylosuccinate synthetase family. As to quaternary structure, homodimer. Requires Mg(2+) as cofactor.

The protein resides in the cytoplasm. The catalysed reaction is IMP + L-aspartate + GTP = N(6)-(1,2-dicarboxyethyl)-AMP + GDP + phosphate + 2 H(+). The protein operates within purine metabolism; AMP biosynthesis via de novo pathway; AMP from IMP: step 1/2. Plays an important role in the de novo pathway of purine nucleotide biosynthesis. Catalyzes the first committed step in the biosynthesis of AMP from IMP. This chain is Adenylosuccinate synthetase, found in Mycobacterium marinum (strain ATCC BAA-535 / M).